The chain runs to 553 residues: Arginine--tRNA ligase (553 aa).

Positions 130–140 match the 'HIGH' region motif; it reads ANPTGPIHLGG.

This sequence belongs to the class-I aminoacyl-tRNA synthetase family. As to quaternary structure, monomer.

The protein resides in the cytoplasm. The catalysed reaction is tRNA(Arg) + L-arginine + ATP = L-arginyl-tRNA(Arg) + AMP + diphosphate. This chain is Arginine--tRNA ligase, found in Corynebacterium aurimucosum (strain ATCC 700975 / DSM 44827 / CIP 107346 / CN-1) (Corynebacterium nigricans).